A 1067-amino-acid polypeptide reads, in one-letter code: MLKSLLIIVIVFLHRELCDGIQLILFDNWPSAQNVCASAVADATANGQCTTKSIQKHLELLTVIILLKLFGVFHRINQQHGCSGDNSVKSASYAINAVASRTSGELDFVFVGPTCTTDIRTIGDFAEIWKSPVIGYEPVFEARGVQELTSVINVAQFSVGGVAETLVFLMKELEQVEITLVGSVKVLPNGLSLSNDLRSYNEIMNSFKIREYVEVDENDVDWTKVDQKIKRGARMIVVCADFYDIYSAFYNIGIRSLSGFRFIIVVILNKPPDEILNQPNVKNLLYGSNAFIISPLQEQYSDAFSIMQDVIPNLADDQFTTFLRIYHACYAYCVGSVNGAETQTDNYHTAMSGKAVTTKYGTFTFDNSGSVLTNYAVFTINPAEMTFESILTLKSVAKSCDTYNCFQLSPNKTSDLLWTLKDMDPPDDCVAKSSCVNYIPHIIAAVVIVTIIVIAIVIIVKQRRHKLNIYKLTWKVPKESLKIIVNKNADAKMQRELENRASNTDNAAALTSRRRVFGSYALVGTQRAEYVQFKQIRKINFPETTLDYLYSLKQLQHDNLAKFYGIQVNDDIMTMTILHTLVERGTLEEFCLDRDFGMDDTFKSAFMRDILKGLQYLHKSSIGYHGHLQASTCLIDINWVLKLTLYGVSNFMSDQLDAENIKVPEQAAHMITYPQYVCFPPEHIREYDDSGKQPPRVVRGSPKGDIYCVGMIFYMMVEREDPYHLIHSVERPNATLIKQILNENHMPRITDDYRQENMLLEMCKECWDRNPDKRPTIKKLIESISTVYPLSKGNLVDQMIRMSEKYADELEQMVAIRTADLADAQMQTMRLLNEMLPASIAKDLKNGLIMPPRSYESATVMFVQICDFNALMKRSSPEQVIAFLNDIYDQFDTVIKRHDAYKVETTGETYMVASGVPHENEGRHIFEVAEISLEIREISYIYVLQHDKNYKLRIRIGFHAGPIAAGVIGIRSPRYCLFGDTVNFASRMQSNCPPNQIQTSEITARLLFDSHEYKFVKRGIVHVKGKGEVNCYWLNEHLHEETEPPLPPMTPVPNPLRRGSIVPLQKA.

Positions 1–20 are cleaved as a signal peptide; that stretch reads MLKSLLIIVIVFLHRELCDG. Residues 21–438 are Extracellular-facing; that stretch reads IQLILFDNWP…CVAKSSCVNY (418 aa). The N-linked (GlcNAc...) asparagine glycan is linked to Asn411. A helical transmembrane segment spans residues 439–459; sequence IPHIIAAVVIVTIIVIAIVII. The Cytoplasmic portion of the chain corresponds to 460 to 1067; sequence VKQRRHKLNI…RGSIVPLQKA (608 aa). Positions 509–791 constitute a Protein kinase domain; it reads ALTSRRRVFG…ESISTVYPLS (283 aa). ATP-binding positions include 515-523 and Lys534; that span reads RVFGSYALV. Residues 859–989 enclose the Guanylate cyclase domain; the sequence is TVMFVQICDF…DTVNFASRMQ (131 aa).

The protein belongs to the adenylyl cyclase class-4/guanylyl cyclase family. Expressed predominantly in AWC but also in AWB, ASI, ASJ and ASK sensory neurons and in I1 interneuron.

Its subcellular location is the cell membrane. It localises to the cell projection. It is found in the cilium. It carries out the reaction GTP = 3',5'-cyclic GMP + diphosphate. Functionally, guanylate cyclase involved in the production of the second messenger cGMP. Regulates chemotaxis responses toward volatile odorants in AWC sensory neurons and their avoidance in AWB sensory neurons. May be involved in sensitivity to quinine by regulating egl-4 activity through the production of cGMP. Involved in phototransduction in ASJ neurons downstream of G protein coupled-photoreceptor lite-1. Required to maintain the expression of putative olfactory receptor str-2 in AWC neurons in adults. In AWB and AWC sensory neurons, mediates the recognition of food oders which subsequently allows for the detection of preferred food sources. Involved in AWB sensory neuron development and extension during postembryonic development, potentially via mediating localization of tub-1 and PI(4,5)P2 to membrane cilia. The chain is Receptor-type guanylate cyclase gcy-10 from Caenorhabditis elegans.